The chain runs to 272 residues: Shikimate dehydrogenase (NADP(+)) (272 aa).

Shikimate is bound by residues 14-16 and Thr61; that span reads SKS. Residue Lys65 is the Proton acceptor of the active site. Residue Glu77 coordinates NADP(+). Residues Asn86 and Asp102 each contribute to the shikimate site. Residues 126 to 130, 149 to 154, and Met213 contribute to the NADP(+) site; these read GAGGA and NRTQEK. Tyr215 provides a ligand contact to shikimate. An NADP(+)-binding site is contributed by Gly237.

This sequence belongs to the shikimate dehydrogenase family. As to quaternary structure, homodimer.

The catalysed reaction is shikimate + NADP(+) = 3-dehydroshikimate + NADPH + H(+). It participates in metabolic intermediate biosynthesis; chorismate biosynthesis; chorismate from D-erythrose 4-phosphate and phosphoenolpyruvate: step 4/7. In terms of biological role, involved in the biosynthesis of the chorismate, which leads to the biosynthesis of aromatic amino acids. Catalyzes the reversible NADPH linked reduction of 3-dehydroshikimate (DHSA) to yield shikimate (SA). This Erwinia tasmaniensis (strain DSM 17950 / CFBP 7177 / CIP 109463 / NCPPB 4357 / Et1/99) protein is Shikimate dehydrogenase (NADP(+)).